Here is a 4576-residue protein sequence, read N- to C-terminus: Mucin-2 (4576 aa).

The signal sequence occupies residues 1–20; the sequence is MGLPLARLVAACLVLALAKG. Serine 21 is subject to Phosphoserine. The VWFD 1 domain occupies 32–205; that stretch reads HVCSTWGDFH…KINKPEVQCE (174 aa). Cystine bridges form between cysteine 34/cysteine 166, cysteine 56/cysteine 204, cysteine 64/cysteine 163, cysteine 216/cysteine 253, cysteine 223/cysteine 248, cysteine 235/cysteine 273, cysteine 255/cysteine 261, cysteine 263/cysteine 289, cysteine 293/cysteine 327, cysteine 306/cysteine 319, cysteine 310/cysteine 349, cysteine 329/cysteine 343, cysteine 351/cysteine 373, cysteine 368/cysteine 385, cysteine 371/cysteine 380, cysteine 389/cysteine 526, cysteine 411/cysteine 561, cysteine 433/cysteine 441, cysteine 572/cysteine 617, cysteine 586/cysteine 612, cysteine 599/cysteine 637, cysteine 619/cysteine 625, cysteine 627/cysteine 652, cysteine 659/cysteine 696, cysteine 672/cysteine 686, cysteine 676/cysteine 716, cysteine 698/cysteine 710, cysteine 718/cysteine 740, and cysteine 738/cysteine 747. Position 46 (aspartate 46) interacts with Ca(2+). Cu(+) contacts are provided by methionine 143 and methionine 151. Glutamate 153 contacts Cu(2+). Asparagine 160 carries an N-linked (GlcNAc...) asparagine glycan. Aspartate 168, asparagine 170, and glutamate 177 together coordinate Ca(2+). Histidine 275 provides a ligand contact to Cu(2+). Residues 293 to 349 enclose the TIL domain; that stretch reads CPNNMVYLESSSPCVDTCSHLEVSSLCEEHYMDGCFCPEGTVYDDITGSGCIPVSQC. Cu(2+) is bound at residue histidine 322. A Cu(+)-binding site is contributed by methionine 324. In terms of domain architecture, VWFD 2 spans 387–562; it reads ETCALEGGSH…NTWKAQSSCH (176 aa). Position 401 (aspartate 401) interacts with Ca(2+). Asparagine 421 carries an N-linked (GlcNAc...) asparagine glycan. Ca(2+) is bound by residues asparagine 528, asparagine 530, leucine 532, aspartate 535, and aspartate 536. N-linked (GlcNAc...) asparagine glycosylation is present at asparagine 668. N-linked (GlcNAc...) asparagine glycosylation is present at asparagine 768. Intrachain disulfides connect cysteine 782-cysteine 818, cysteine 800-cysteine 812, cysteine 820-cysteine 843, cysteine 837-cysteine 855, cysteine 841-cysteine 850, cysteine 859-cysteine 990, cysteine 881-cysteine 1025, cysteine 890-cysteine 987, cysteine 907-cysteine 914, cysteine 1035-cysteine 1078, cysteine 1049-cysteine 1073, cysteine 1060-cysteine 1100, cysteine 1080-cysteine 1088, cysteine 1090-cysteine 1115, cysteine 1106-cysteine 1135, cysteine 1119-cysteine 1161, cysteine 1143-cysteine 1185, cysteine 1165-cysteine 1179, cysteine 1187-cysteine 1211, cysteine 1206-cysteine 1236, and cysteine 1209-cysteine 1219. Asparagine 838 carries an N-linked (GlcNAc...) asparagine glycan. The VWFD 3 domain occupies 857 to 1026; that stretch reads STCSIYGSGH…NSWKEASTCP (170 aa). Aspartate 871 contributes to the Ca(2+) binding site. A glycan (N-linked (GlcNAc...) asparagine) is linked at asparagine 893. 4 residues coordinate Ca(2+): asparagine 992, aspartate 994, asparagine 999, and aspartate 1000. 2 N-linked (GlcNAc...) asparagine glycosylation sites follow: asparagine 1137 and asparagine 1152. Residues asparagine 1213, asparagine 1228, and asparagine 1244 are each glycosylated (N-linked (GlcNAc...) asparagine). Residues threonine 1265, threonine 1268, threonine 1269, threonine 1281, and threonine 1292 are each glycosylated (O-linked (GalNAc) threonine). Residues asparagine 1305, histidine 1308, glycine 1315, aspartate 1316, and glutamate 1318 each coordinate Ca(2+). The N-linked (GlcNAc...) asparagine glycan is linked to asparagine 1352. Ca(2+) is bound by residues aspartate 1375 and tyrosine 1376. 5 tandem repeats follow at residues 1395–1415, 1416–1427, 1428–1437, 1438–1453, and 1454–1460. Residues 1395-2866 are disordered; sequence SPTTSTTTLS…PTTSSTFTTP (1472 aa). One copy of the 7B repeat lies at 1478-1497; it reads PSTTSPTTPSTTPSTTSPTT. Residues 1498 to 1510 form an 8A repeat; sequence PSTTSPTTPTSTS. The stretch at 1530–1556 is one 9B repeat; it reads SPTTSPTTPSTTSPTISTTTSTISPTT. The stretch at 1557-1572 is one 10A repeat; that stretch reads PSTTSPNTPSTTSSTI. The stretch at 1573–1588 is one 10B repeat; it reads PSTTSPTTPSTTSPTI. An 11A repeat occupies 1589 to 1607; that stretch reads STTTSTTSPTTPSTTSPTT. An 11B repeat occupies 1608–1634; it reads PSTTSPTTPSTTSPTISTTTLTTSPTT. Repeat copies occupy residues 1635 to 1642 and 1665 to 1681. Residues asparagine 2529 and asparagine 2910 are each glycosylated (N-linked (GlcNAc...) asparagine). 2 stretches are compositionally biased toward low complexity: residues 2975-3623 and 3631-3706; these read PSST…GSTP and PGPT…TSPS. The segment at 2975–3706 is disordered; the sequence is PSSTTTETPT…SSTSPITSPS (732 aa). N-linked (GlcNAc...) asparagine glycans are attached at residues asparagine 3734, asparagine 3745, and asparagine 3756. Over residues 3764 to 3774 the composition is skewed to pro residues; it reads STPTPSTPTPT. The disordered stretch occupies residues 3764–3806; the sequence is STPTPSTPTPTPSQTTTPSTTSSKSTPSTPQSTSPKSTLSTPT. The segment covering 3775 to 3806 has biased composition (low complexity); sequence PSQTTTPSTTSSKSTPSTPQSTSPKSTLSTPT. N-linked (GlcNAc...) asparagine glycans are attached at residues asparagine 3823, asparagine 3830, and asparagine 3903. The region spanning 3880 to 4063 is the VWFD 4 domain; it reads CYCTGWGDPH…VNDPSKPHCP (184 aa). 3 disulfide bridges follow: cysteine 3882/cysteine 4023, cysteine 3904/cysteine 4062, and cysteine 3928/cysteine 3936. N-linked (GlcNAc...) asparagine glycosylation is found at asparagine 3991, asparagine 4017, asparagine 4028, asparagine 4083, asparagine 4149, asparagine 4183, asparagine 4254, asparagine 4277, asparagine 4351, asparagine 4366, asparagine 4434, asparagine 4465, and asparagine 4488. 2 VWFC domains span residues 4213–4282 and 4320–4387; these read CVGP…TSCK and GVCV…KKCQ. 4 disulfide bridges follow: cysteine 4471–cysteine 4518, cysteine 4485–cysteine 4532, cysteine 4494–cysteine 4548, and cysteine 4498–cysteine 4550. Positions 4471–4556 constitute a CTCK domain; sequence CSAVSVMKEI…SCLCQDTVCG (86 aa).

In terms of assembly, homomultimer; disulfide-linked. The N- and C-terminus mediate their assembly into higher order structures to form filaments. The CTCK domains of two polypeptides associate in the endoplasmic reticulum to generate intermolecularly disulfide-bonded dimers. These dimers progress to the Golgi apparatus, which is a more acidic environment than the endoplasmic reticulum. Under acidic conditions, the N-termini form non-covalent intermolecular interactions that juxtapose assemblies of the third VWD domain (VWD3) from different CTCK-linked dimers. The VWD3 assemblies then become disulfide bonded to one another to produce long, disulfide-linked polymers that remain highly compact until secretion. Interacts with FCGBP. Interacts with AGR2; disulfide-linked. In terms of processing, O-glycosylated. O-glycosylation is required for mucin assembly. Goblet cells synthesize two forms of mucin that differ in branched chain O-glycosylation and the site of production in the colon. May undergo proteolytic cleavage in the outer mucus layer of the colon, contributing to the expanded volume and loose nature of this layer which allows for bacterial colonization in contrast to the inner mucus layer which is dense and devoid of bacteria. Post-translationally, at low pH of 6 and under, undergoes autocatalytic cleavage in vitro in the N-terminal region of the fourth VWD domain. It is likely that this also occurs in vivo and is triggered by the low pH of the late secretory pathway. Highly expressed in goblet cells of the colon with lower levels in the small intestine and no expression in the stomach (at protein level).

Its subcellular location is the secreted. Coats the epithelia of the intestines and other mucus membrane-containing organs to provide a protective, lubricating barrier against particles and infectious agents at mucosal surfaces. Major constituent of the colon mucus, which is mainly formed by large polymeric networks of MUC2 secreted by goblet cells that cover the exposed surfaces of intestine. MUC2 networks form hydrogels that guard the underlying epithelium from pathogens and other hazardous matter entering from the outside world, while permitting nutrient absorption and gas exchange. Acts as a divalent copper chaperone that protects intestinal cells from copper toxicity and facilitates nutritional copper unptake into cells. Binds both Cu(2+) and its reduced form, Cu(1+), at two juxtaposed binding sites: Cu(2+), once reduced to Cu(1+) by vitamin C (ascorbate) or other dietary antioxidants, transits to the other binding site. MUC2-bound Cu(1+) is protected from oxidation in aerobic environments, and can be released for nutritional delivery to cells. Mucin gels store antimicrobial molecules that participate in innate immunity. Mucin glycoproteins also house and feed the microbiome, lubricate tissue surfaces, and may facilitate the removal of contaminants and waste products from the body. Goblet cells synthesize two forms of MUC2 mucin that differ in branched chain O-glycosylation and the site of production in the colon: a (1) 'thick' mucus that wraps the microbiota to form fecal pellets is produced in the proximal, ascending colon. 'Thick' mucus transits along the descending colon and is lubricated by a (2) 'thin' MUC2 mucus produced in the distal colon which adheres to the 'thick' mucus. This Mus musculus (Mouse) protein is Mucin-2.